The sequence spans 169 residues: X polypeptide (169 aa).

The protein belongs to the IagB/IpgF/P19 family.

The polypeptide is X polypeptide (X) (Escherichia coli).